A 251-amino-acid polypeptide reads, in one-letter code: Octanoyltransferase (251 aa).

One can recognise a BPL/LPL catalytic domain in the interval 56–241; the sequence is ADTGDEIWVV…NLDGASAAAD (186 aa). Substrate-binding positions include 96–103, 168–170, and 181–183; these read RGGQITYH, ALG, and GLS. Cysteine 199 functions as the Acyl-thioester intermediate in the catalytic mechanism.

Belongs to the LipB family.

Its subcellular location is the cytoplasm. It catalyses the reaction octanoyl-[ACP] + L-lysyl-[protein] = N(6)-octanoyl-L-lysyl-[protein] + holo-[ACP] + H(+). The protein operates within protein modification; protein lipoylation via endogenous pathway; protein N(6)-(lipoyl)lysine from octanoyl-[acyl-carrier-protein]: step 1/2. Functionally, catalyzes the transfer of endogenously produced octanoic acid from octanoyl-acyl-carrier-protein onto the lipoyl domains of lipoate-dependent enzymes. Lipoyl-ACP can also act as a substrate although octanoyl-ACP is likely to be the physiological substrate. The polypeptide is Octanoyltransferase (Burkholderia orbicola (strain AU 1054)).